Reading from the N-terminus, the 492-residue chain is Virion host shutoff protein (492 aa).

Disordered regions lie at residues glutamate 110–serine 130, phenylalanine 143–serine 165, serine 288–methionine 307, and glutamate 334–leucine 369. The span at alanine 144–serine 165 shows a compositional bias: low complexity.

It belongs to the herpesviridae VHS protein family. As to quaternary structure, interacts with human EIF4H, EIF4A1 and EIF4A2; interaction with eIF4AI and EIF4A2 presumably allows Vhs protein to associate with the eIF4F cap-binding complex.

The protein resides in the virion. Its function is as follows. Minor structural protein that acts as an endoribonuclease during lytic infection. Degrades host mRNAs in the cytoplasm by cutting them at preferred sites, including some in regions of translation initiation. Together with inhibition of host splicing by ICP27, contributes to an overall decrease in host protein synthesis. Also, after the onset of viral transcription, accelerates the turnover of viral mRNA, thereby facilitating the sequential expression of different classes of viral genes. Binds translation initiation factors eIF4H, eIF4AI, and eIF4AII, thereby may interact directly with the translation initiation complex and thus digest specifically mRNAs. Also impedes antigen presentation by major histocompatibility complex class I and class II molecules, inhibits secretion of cytokines that would otherwise recruit lymphocytes and neutrophils cells to the site of infection and blocks the activation of dendritic cells. Impedes the alpha/beta interferon-mediated response to infection. Inhibits the integrated stress response (ISR) in the infected cell, this function requires the endonuclease activity. Stress granule formation is thus inhibited, which allows protein synthesis and viral replication. The sequence is that of Virion host shutoff protein (UL41) from Human herpesvirus 2 (strain G) (HHV-2).